Here is a 302-residue protein sequence, read N- to C-terminus: Glycine--tRNA ligase alpha subunit (302 aa).

It belongs to the class-II aminoacyl-tRNA synthetase family. As to quaternary structure, tetramer of two alpha and two beta subunits.

The protein localises to the cytoplasm. The catalysed reaction is tRNA(Gly) + glycine + ATP = glycyl-tRNA(Gly) + AMP + diphosphate. This Wigglesworthia glossinidia brevipalpis protein is Glycine--tRNA ligase alpha subunit.